Reading from the N-terminus, the 281-residue chain is Insecticidal crystal toxin protein (281 aa).

Antigenic epitope regions lie at residues 54–78 (NYSH…VYTF), 91–104 (IYTH…AVKA), 108–116 (GTASKVVQG), 131–148 (FKIT…FIRI), 160–172 (AVIN…VAEL), 189–196 (KYKDFQYL), 208–216 (QNISLVFNR), 221–236 (TNTT…LPIT), and 247–256 (KLETVQQIIN).

It belongs to the delta endotoxin family.

Promotes colloidosmotic lysis by binding to the midgut epithelial cells of insects. Active against Mamestra brassicae. The chain is Insecticidal crystal toxin protein from Bacillus thuringiensis subsp. kurstaki.